The primary structure comprises 149 residues: Nucleoside diphosphate kinase (149 aa).

ATP contacts are provided by K9, F57, R85, T91, R102, and N112. Residue H115 is the Pros-phosphohistidine intermediate of the active site.

It belongs to the NDK family. The cofactor is Mg(2+).

The protein resides in the cytoplasm. The enzyme catalyses a 2'-deoxyribonucleoside 5'-diphosphate + ATP = a 2'-deoxyribonucleoside 5'-triphosphate + ADP. It catalyses the reaction a ribonucleoside 5'-diphosphate + ATP = a ribonucleoside 5'-triphosphate + ADP. Major role in the synthesis of nucleoside triphosphates other than ATP. The ATP gamma phosphate is transferred to the NDP beta phosphate via a ping-pong mechanism, using a phosphorylated active-site intermediate. This Methanospirillum hungatei JF-1 (strain ATCC 27890 / DSM 864 / NBRC 100397 / JF-1) protein is Nucleoside diphosphate kinase.